A 479-amino-acid chain; its full sequence is ESX-1 secretion system ATPase EccB1 (479 aa).

Residues 1-44 are Cytoplasmic-facing; sequence MAGFRLTTKVQVSGWRFLLRRVEHAIVRRDTRMFDDPLQFYSRA. A helical transmembrane segment spans residues 45–65; it reads VFAGVVVSVLICLGAALMAYF. At 66-479 the chain is on the periplasmic side; the sequence is KPLGKQGSDQ…NPRKVASGEG (414 aa). An intrachain disulfide couples Cys-152 to Cys-347.

The protein belongs to the EccB family. As to quaternary structure, part of the ESX-1 / type VII secretion system (T7SS), which is composed of cytosolic and membrane components. The ESX-1 membrane complex is composed of EccB1, EccCa1, EccCb1, EccD1 and EccE1.

Its subcellular location is the cell inner membrane. In terms of biological role, an ATPase. Part of the ESX-1 / type VII specialized secretion system (T7SS), which exports several proteins including EsxA and EsxB. Plays a role in DNA conjugation, in both donor and recipient strains. The chain is ESX-1 secretion system ATPase EccB1 from Mycolicibacterium smegmatis (strain MKD8) (Mycobacterium smegmatis).